The primary structure comprises 60 residues: Large ribosomal subunit protein uL30 (60 aa).

Belongs to the universal ribosomal protein uL30 family. As to quaternary structure, part of the 50S ribosomal subunit.

This Paraburkholderia phytofirmans (strain DSM 17436 / LMG 22146 / PsJN) (Burkholderia phytofirmans) protein is Large ribosomal subunit protein uL30.